The following is a 514-amino-acid chain: Peptide chain release factor 3 (514 aa).

Residues 8-268 (KKRRTFAIIS…TFLEFAPEPH (261 aa)) form the tr-type G domain. GTP is bound by residues 17–24 (SHPDAGKT), 85–89 (DTPGH), and 139–142 (NKLD).

It belongs to the TRAFAC class translation factor GTPase superfamily. Classic translation factor GTPase family. PrfC subfamily.

The protein resides in the cytoplasm. In terms of biological role, increases the formation of ribosomal termination complexes and stimulates activities of RF-1 and RF-2. It binds guanine nucleotides and has strong preference for UGA stop codons. It may interact directly with the ribosome. The stimulation of RF-1 and RF-2 is significantly reduced by GTP and GDP, but not by GMP. This is Peptide chain release factor 3 from Streptococcus agalactiae serotype Ia (strain ATCC 27591 / A909 / CDC SS700).